A 397-amino-acid polypeptide reads, in one-letter code: Tryptophan synthase beta chain (397 aa).

Lys91 carries the post-translational modification N6-(pyridoxal phosphate)lysine.

This sequence belongs to the TrpB family. Tetramer of two alpha and two beta chains. Pyridoxal 5'-phosphate is required as a cofactor.

It carries out the reaction (1S,2R)-1-C-(indol-3-yl)glycerol 3-phosphate + L-serine = D-glyceraldehyde 3-phosphate + L-tryptophan + H2O. The protein operates within amino-acid biosynthesis; L-tryptophan biosynthesis; L-tryptophan from chorismate: step 5/5. In terms of biological role, the beta subunit is responsible for the synthesis of L-tryptophan from indole and L-serine. This chain is Tryptophan synthase beta chain, found in Bacillus cereus (strain G9842).